We begin with the raw amino-acid sequence, 744 residues long: Tripartite motif-containing protein 2 (744 aa).

Ser10 carries the post-translational modification Phosphoserine. An RING-type zinc finger spans residues 23-64 (CSICLERYKNPKVLPCLHTFCERCLQNYIPAHSLTLSCPVCR). The B box-type zinc-finger motif lies at 113–154 (GKPLSCPNHDGNVMDFYCQSCETAMCRECTEGEHAEHPTVPL). Zn(2+) is bound by residues Cys118, His121, Cys141, and His146. The stretch at 320–421 (TTNAVASETV…IRGSPFKLKV (102 aa)) is one Filamin repeat. The residue at position 371 (Thr371) is a Phosphothreonine. Residues Ser375, Ser424, and Ser428 each carry the phosphoserine modification. Residues 432–462 (EGVKRRVKSPGSGHVKQKAVKRPASMYSTGK) are disordered. 6 NHL repeats span residues 473–516 (IFRV…FSND), 520–563 (KSRF…FSSD), 564–605 (GKFK…FQPN), 609–652 (VTRF…FNQE), 656–699 (MLKF…FDGS), and 700–743 (GSFL…YRYL).

It belongs to the TRIM/RBCC family. As to quaternary structure, forms homooligomers. Interacts with TRIM3; this interaction reduces TRIM2 activity. Interacts with myosin V; myosin V may not be a substrate for ubiquitination. Interacts with NEFL. Interacts with phosphorylated BCL2L11. Interacts with SIRPA. Post-translationally, RING-type zinc finger-dependent and UBE2D1-dependent autoubiquitination.

Its subcellular location is the cytoplasm. It carries out the reaction S-ubiquitinyl-[E2 ubiquitin-conjugating enzyme]-L-cysteine + [acceptor protein]-L-lysine = [E2 ubiquitin-conjugating enzyme]-L-cysteine + N(6)-ubiquitinyl-[acceptor protein]-L-lysine.. It functions in the pathway protein modification; protein ubiquitination. UBE2D1-dependent E3 ubiquitin-protein ligase that mediates the ubiquitination of NEFL and of phosphorylated BCL2L11. Plays a neuroprotective function. May play a role in neuronal rapid ischemic tolerance. Plays a role in antiviral immunity and limits New World arenavirus infection independently of its ubiquitin ligase activity. This Bos taurus (Bovine) protein is Tripartite motif-containing protein 2 (TRIM2).